Consider the following 599-residue polypeptide: Zinc metalloproteinase dpy-31 (599 aa).

The first 22 residues, 1–22 (MALLKPFLSRTFSSFFATITGG), serve as a signal peptide directing secretion. A propeptide spanning residues 23-211 (RNLIDSIEEL…IQHGRRTKRK (189 aa)) is cleaved from the precursor. The region spanning 211–410 (KFIRSELRRW…IRLMNVIYCS (200 aa)) is the Peptidase M12A domain. N-linked (GlcNAc...) asparagine glycosylation is present at Asn-251. 5 disulfides stabilise this stretch: Cys-254/Cys-409, Cys-277/Cys-298, Cys-413/Cys-433, Cys-435/Cys-444, and Cys-455/Cys-483. His-306 is a binding site for Zn(2+). Residue Glu-307 is part of the active site. Residues His-310 and His-316 each coordinate Zn(2+). Positions 405-445 (NVIYCSDSCAQKLPCQRGGYTDPRRCGRCRCPDGFTGKLCE) constitute an EGF-like domain. The CUB domain occupies 455–571 (CGGRIELTSS…KGFQAQVRAL (117 aa)). Residue Asn-522 is glycosylated (N-linked (GlcNAc...) asparagine).

Zn(2+) serves as cofactor.

It is found in the secreted. With respect to regulation, inhibited by marimastat and tripeptide hydroxamic acids. Metalloprotease which cleaves the carboxyl terminus of procollagens to mature collagens. Probably involved in cuticular collagen maturation. The chain is Zinc metalloproteinase dpy-31 from Brugia malayi (Filarial nematode worm).